The sequence spans 348 residues: Haptoglobin-related protein (348 aa).

The not cleaved signal peptide spans 1-18; that stretch reads MSDLGAVISLLLWGRQLF. In terms of domain architecture, Sushi spans 34-87; that stretch reads FPKPPEIANGYVEHLFRYQCKNYYRLRTEGDGVYTLNDKKQWINKAVGDKLPEC. Residues 104–346 enclose the Peptidase S1 domain; sequence ILGGHLDAKG…IQHWVQKTIA (243 aa). 2 disulfides stabilise this stretch: cysteine 251/cysteine 282 and cysteine 293/cysteine 323.

It belongs to the peptidase S1 family. In adult liver the amount of HPR mRNA is at the lower limit of detection, therefore the extent of its expression is at most less than 1000-fold that of the HP1F gene. No HPR mRNA can be detected in fetal liver. Expressed in Hep-G2 and leukemia MOLT-4 cell lines.

It localises to the secreted. In terms of biological role, primate-specific plasma protein associated with apolipoprotein L-I (apoL-I)-containing high-density lipoprotein (HDL). This HDL particle, termed trypanosome lytic factor-1 (TLF-1), mediates human innate immune protection against many species of African trypanosomes. Binds hemoglobin with high affinity and may contribute to the clearance of cell-free hemoglobin to allow hepatic recycling of heme iron. The protein is Haptoglobin-related protein (HPR) of Homo sapiens (Human).